The sequence spans 496 residues: Anaerobic nitric oxide reductase flavorubredoxin (496 aa).

The interval 30–210 (TKGTSYNSYL…PFSALVTAKI (181 aa)) is zinc metallo-hydrolase. Residues H79, E81, D83, H147, D166, and H227 each coordinate Fe cation. Residues 254 to 393 (ITIFYDSMSN…LCREHGQFIA (140 aa)) enclose the Flavodoxin-like domain. FMN contacts are provided by residues 260 to 264 (SMSNN) and 342 to 369 (AFGSYGWNGGAVDRIHSRLTDAGFETAV). Residues 444-495 (KQCMLCSVCNWVYDPEIGEPNQGVEPNTPWSSVPNDFLCPECHLGKDVFVEI) form the Rubredoxin-like domain. Fe cation is bound by residues C449, C452, C482, and C485.

The protein in the N-terminal section; belongs to the zinc metallo-hydrolase group 3 family. In terms of assembly, homotetramer. Fe cation is required as a cofactor. The cofactor is FMN.

The protein resides in the cytoplasm. Its pathway is nitrogen metabolism; nitric oxide reduction. In terms of biological role, anaerobic nitric oxide reductase; uses NADH to detoxify nitric oxide (NO), protecting several 4Fe-4S NO-sensitive enzymes. Has at least 2 reductase partners, only one of which (NorW, flavorubredoxin reductase) has been identified. NO probably binds to the di-iron center; electrons enter from the NorW at rubredoxin and are transferred sequentially to the FMN center and the di-iron center. Also able to function as an aerobic oxygen reductase. In Aliivibrio fischeri (strain ATCC 700601 / ES114) (Vibrio fischeri), this protein is Anaerobic nitric oxide reductase flavorubredoxin.